Consider the following 698-residue polypeptide: Putative transposon gamma-delta 80.3 kDa protein (698 aa).

The chain is Putative transposon gamma-delta 80.3 kDa protein (tnpX) from Escherichia coli (strain K12).